Reading from the N-terminus, the 1372-residue chain is DNA-directed RNA polymerase subunit beta (1372 aa).

This sequence belongs to the RNA polymerase beta chain family. In terms of assembly, the RNAP catalytic core consists of 2 alpha, 1 beta, 1 beta' and 1 omega subunit. When a sigma factor is associated with the core the holoenzyme is formed, which can initiate transcription.

It carries out the reaction RNA(n) + a ribonucleoside 5'-triphosphate = RNA(n+1) + diphosphate. Its function is as follows. DNA-dependent RNA polymerase catalyzes the transcription of DNA into RNA using the four ribonucleoside triphosphates as substrates. The protein is DNA-directed RNA polymerase subunit beta of Psychrobacter sp. (strain PRwf-1).